We begin with the raw amino-acid sequence, 342 residues long: N-acetyl-gamma-glutamyl-phosphate reductase (342 aa).

The active site involves C146.

Belongs to the NAGSA dehydrogenase family. Type 1 subfamily.

The protein localises to the cytoplasm. The enzyme catalyses N-acetyl-L-glutamate 5-semialdehyde + phosphate + NADP(+) = N-acetyl-L-glutamyl 5-phosphate + NADPH + H(+). The protein operates within amino-acid biosynthesis; L-arginine biosynthesis; N(2)-acetyl-L-ornithine from L-glutamate: step 3/4. In terms of biological role, catalyzes the NADPH-dependent reduction of N-acetyl-5-glutamyl phosphate to yield N-acetyl-L-glutamate 5-semialdehyde. This chain is N-acetyl-gamma-glutamyl-phosphate reductase, found in Streptomyces coelicolor (strain ATCC BAA-471 / A3(2) / M145).